Consider the following 677-residue polypeptide: Secretogranin-1 (677 aa).

The N-terminal stretch at 1–20 (MQPAMLLGLLGAAALAAVSS) is a signal peptide. A disulfide bond links Cys-36 and Cys-57. 2 disordered regions span residues 63 to 505 (KSGK…RQYE) and 531 to 558 (NSDF…VTLT). A compositionally biased stretch (basic and acidic residues) spans 64–90 (SGKEVKGEEKGENQNSKFEVRLLRDPA). A phosphoserine mark is found at Ser-93, Ser-99, and Ser-100. The O-linked (Xyl...) (chondroitin sulfate) serine glycan is linked to Ser-93. Thr-115 carries O-linked (GalNAc...) threonine glycosylation. The segment covering 118–133 (GNEKWTEGGGHSREGV) has biased composition (basic and acidic residues). A phosphoserine mark is found at Ser-129, Ser-147, Ser-190, and Ser-220. Basic and acidic residues-rich tracts occupy residues 148–192 (KEAK…DSGE) and 200–249 (KRSE…KPQE). Ser-237 carries an O-linked (Xyl...) (chondroitin sulfate) serine glycan. A compositionally biased stretch (acidic residues) spans 251 to 280 (TDQDQSQEESQEGEEGEEGEEGEEGEEDSA). Ser-256, Ser-260, Ser-300, Ser-301, Ser-318, and Ser-342 each carry phosphoserine. The segment covering 306-322 (PLSEERRPSPKESKEAD) has biased composition (basic and acidic residues). Tyr-348 bears the Sulfotyrosine mark. Composition is skewed to basic and acidic residues over residues 363–409 (RGSE…ERSY) and 421–455 (GREP…DTAK). 3 positions are modified to phosphoserine: Ser-365, Ser-375, and Ser-378. At Tyr-472 the chain carries Sulfotyrosine. The segment covering 491–504 (EESREEVRFPDRQY) has biased composition (basic and acidic residues). Phosphoserine occurs at positions 493, 532, and 543. A sulfotyrosine mark is found at Tyr-566 and Tyr-624. Positions 622–646 (DFYDSEEQMGPHQEANDEKARADQR) are disordered. Phosphoserine is present on Ser-626. Positions 635-646 (EANDEKARADQR) are enriched in basic and acidic residues.

This sequence belongs to the chromogranin/secretogranin protein family. As to quaternary structure, interacts with ITPR1 in the secretory granules.

It localises to the secreted. Functionally, secretogranin-1 is a neuroendocrine secretory granule protein, which may be the precursor for other biologically active peptides. The polypeptide is Secretogranin-1 (Chgb) (Mus musculus (Mouse)).